A 250-amino-acid chain; its full sequence is Ubiquinone/menaquinone biosynthesis C-methyltransferase UbiE (250 aa).

Residues T73, D94, 122-123, and S139 each bind S-adenosyl-L-methionine; that span reads NS.

Belongs to the class I-like SAM-binding methyltransferase superfamily. MenG/UbiE family.

The enzyme catalyses a 2-demethylmenaquinol + S-adenosyl-L-methionine = a menaquinol + S-adenosyl-L-homocysteine + H(+). It carries out the reaction a 2-methoxy-6-(all-trans-polyprenyl)benzene-1,4-diol + S-adenosyl-L-methionine = a 5-methoxy-2-methyl-3-(all-trans-polyprenyl)benzene-1,4-diol + S-adenosyl-L-homocysteine + H(+). It participates in quinol/quinone metabolism; menaquinone biosynthesis; menaquinol from 1,4-dihydroxy-2-naphthoate: step 2/2. The protein operates within cofactor biosynthesis; ubiquinone biosynthesis. Its function is as follows. Methyltransferase required for the conversion of demethylmenaquinol (DMKH2) to menaquinol (MKH2) and the conversion of 2-polyprenyl-6-methoxy-1,4-benzoquinol (DDMQH2) to 2-polyprenyl-3-methyl-6-methoxy-1,4-benzoquinol (DMQH2). In Wigglesworthia glossinidia brevipalpis, this protein is Ubiquinone/menaquinone biosynthesis C-methyltransferase UbiE.